The following is a 349-amino-acid chain: N-acetyl-gamma-glutamyl-phosphate reductase (349 aa).

The active site involves C149.

It belongs to the NAGSA dehydrogenase family. Type 1 subfamily.

Its subcellular location is the cytoplasm. The enzyme catalyses N-acetyl-L-glutamate 5-semialdehyde + phosphate + NADP(+) = N-acetyl-L-glutamyl 5-phosphate + NADPH + H(+). It functions in the pathway amino-acid biosynthesis; L-arginine biosynthesis; N(2)-acetyl-L-ornithine from L-glutamate: step 3/4. In terms of biological role, catalyzes the NADPH-dependent reduction of N-acetyl-5-glutamyl phosphate to yield N-acetyl-L-glutamate 5-semialdehyde. This Acinetobacter baylyi (strain ATCC 33305 / BD413 / ADP1) protein is N-acetyl-gamma-glutamyl-phosphate reductase.